A 295-amino-acid polypeptide reads, in one-letter code: Fructose-bisphosphate aldolase class 1 (295 aa).

The active-site Proton acceptor is the Glu-176. Lys-213 acts as the Schiff-base intermediate with dihydroxyacetone-P in catalysis.

Belongs to the class I fructose-bisphosphate aldolase family.

The enzyme catalyses beta-D-fructose 1,6-bisphosphate = D-glyceraldehyde 3-phosphate + dihydroxyacetone phosphate. It participates in carbohydrate degradation; glycolysis; D-glyceraldehyde 3-phosphate and glycerone phosphate from D-glucose: step 4/4. The chain is Fructose-bisphosphate aldolase class 1 from Clostridium acetobutylicum (strain ATCC 824 / DSM 792 / JCM 1419 / IAM 19013 / LMG 5710 / NBRC 13948 / NRRL B-527 / VKM B-1787 / 2291 / W).